The primary structure comprises 224 residues: 7-cyano-7-deazaguanine synthase (224 aa).

12–22 (LSGGLDSSTVT) lines the ATP pocket. The Zn(2+) site is built by Cys193, Cys201, Cys204, and Cys207.

It belongs to the QueC family. It depends on Zn(2+) as a cofactor.

It catalyses the reaction 7-carboxy-7-deazaguanine + NH4(+) + ATP = 7-cyano-7-deazaguanine + ADP + phosphate + H2O + H(+). The protein operates within purine metabolism; 7-cyano-7-deazaguanine biosynthesis. Its function is as follows. Catalyzes the ATP-dependent conversion of 7-carboxy-7-deazaguanine (CDG) to 7-cyano-7-deazaguanine (preQ(0)). In Prochlorococcus marinus (strain MIT 9301), this protein is 7-cyano-7-deazaguanine synthase.